The primary structure comprises 494 residues: Cytochrome c-552 (494 aa).

Positions 1–31 (MEKKLKSWQGWLLFGGTMVVVFVLGMIAASV) are cleaved as a signal peptide. His-116 contacts heme c. 3 residues coordinate heme: Cys-144, Cys-147, and Lys-148. Positions 182, 185, 186, 224, 227, and 228 each coordinate heme c. Ca(2+) is bound by residues Glu-230, Tyr-231, Lys-276, and Gln-278. Substrate is bound at residue Tyr-231. Residue His-279 coordinates substrate. Residues His-290, Cys-297, Cys-300, His-301, His-315, Cys-328, Cys-331, His-332, and His-407 each contribute to the heme c site.

It belongs to the cytochrome c-552 family. The cofactor is Ca(2+). Heme c serves as cofactor.

Its subcellular location is the periplasm. The catalysed reaction is 6 Fe(III)-[cytochrome c] + NH4(+) + 2 H2O = 6 Fe(II)-[cytochrome c] + nitrite + 8 H(+). Its pathway is nitrogen metabolism; nitrate reduction (assimilation). Catalyzes the reduction of nitrite to ammonia, consuming six electrons in the process. This is Cytochrome c-552 from Parabacteroides distasonis (strain ATCC 8503 / DSM 20701 / CIP 104284 / JCM 5825 / NCTC 11152).